A 392-amino-acid polypeptide reads, in one-letter code: 23S rRNA (uracil(747)-C(5))-methyltransferase RlmC (392 aa).

Positions 4, 12, 15, and 93 each coordinate [4Fe-4S] cluster. Residues glutamine 218, phenylalanine 247, glutamate 275, and asparagine 321 each contribute to the S-adenosyl-L-methionine site. Residue cysteine 348 is the Nucleophile of the active site.

This sequence belongs to the class I-like SAM-binding methyltransferase superfamily. RNA M5U methyltransferase family. RlmC subfamily.

The enzyme catalyses uridine(747) in 23S rRNA + S-adenosyl-L-methionine = 5-methyluridine(747) in 23S rRNA + S-adenosyl-L-homocysteine + H(+). Catalyzes the formation of 5-methyl-uridine at position 747 (m5U747) in 23S rRNA. This chain is 23S rRNA (uracil(747)-C(5))-methyltransferase RlmC, found in Haemophilus influenzae (strain 86-028NP).